A 491-amino-acid chain; its full sequence is FAD-dependent monooxygenase cle3 (491 aa).

FAD is bound by residues Glu-55, Gly-69, Arg-128, Asp-330, and Ala-343. Residue Asn-380 is glycosylated (N-linked (GlcNAc...) asparagine). Residues Ser-462 to Phe-482 form a helical membrane-spanning segment.

It belongs to the paxM FAD-dependent monooxygenase family. It depends on FAD as a cofactor.

It is found in the membrane. It participates in secondary metabolite biosynthesis; terpenoid biosynthesis. Its function is as follows. FAD-dependent monooxygenase; part of the cluster A that mediates the biosynthesis of chevalone E and its oxidized derivatives that possess a unique five-membered lactone ring and can synergistically enhance the cytotoxicity of doxorubicin (DOX) in breast cancer cells. Within the pathway, cle3 takes part to the biosynthesis of the molecular scaffold by catalyzing the formation of an (S)-epoxide ring at the terminal olefin of the geranylgeranyl group. The molecular scaffold is commonly biosynthesized by a series of enzymes including the non-reducing polyketide synthase (NR-PKS) cle1 that produces the alpha-pyrone triacetic acid lactone (TAL); The membrane-bound prenyltransferase cle5 that accepts TAL as its substrate to perform a C-3 geranylgeranylation reaction, in which the pathway-dedicated GGPS cle6 is required to provide GGPP, the other substrate of cle5; the FAD-dependent monooxygenase Cle3 that forms an (S)-epoxide ring at the terminal olefin of the geranylgeranyl group; and the terpene cyclase Cle7 that catalyzes the cyclization of the prenyl group that yields the pentacyclic pathway intermediate chevalone E. Chevalone E can derivatize into seven new oxidized analogs by the cytochrome P450 monooxygenases cle2 (acting at C-20) and cle4 (acting at C-11 and C-12). The polypeptide is FAD-dependent monooxygenase cle3 (Aspergillus versicolor).